We begin with the raw amino-acid sequence, 242 residues long: ATP synthase subunit a (242 aa).

6 helical membrane-spanning segments follow: residues 29 to 49 (SAVAMIFVSIAASLLLIIAFV), 83 to 103 (VFFPLILTLFLFISLGNIIGM), 114 to 134 (IIVTFSLAMIVFTTTLVYGIY), 140 to 160 (FFSLFLPKNIPLWLAPIMVII), 181 to 201 (VAGHILLKIIAWSIVSLTWFF), and 206 to 226 (IALVIVLIGFELFISILQAYI).

The protein belongs to the ATPase A chain family. As to quaternary structure, F-type ATPases have 2 components, CF(1) - the catalytic core - and CF(0) - the membrane proton channel. CF(1) has five subunits: alpha(3), beta(3), gamma(1), delta(1), epsilon(1). CF(0) has three main subunits: a(1), b(2) and c(9-12). The alpha and beta chains form an alternating ring which encloses part of the gamma chain. CF(1) is attached to CF(0) by a central stalk formed by the gamma and epsilon chains, while a peripheral stalk is formed by the delta and b chains.

It localises to the cell inner membrane. In terms of biological role, key component of the proton channel; it plays a direct role in the translocation of protons across the membrane. The protein is ATP synthase subunit a of Orientia tsutsugamushi (strain Boryong) (Rickettsia tsutsugamushi).